The chain runs to 305 residues: Suppressor of activated egl-4 protein 2 (305 aa).

The tract at residues 138–168 (KRGYESDSSDVSGVSHCSDAKRRRGRPRKDE) is disordered. The a.T hook DNA-binding region spans 158 to 170 (KRRRGRPRKDEEA).

Interacts with phosphorylated egl-4. May interact with itself. May be a component of a histone deacetylase complex containing saeg-2, saeg-1 and hda-2. In terms of tissue distribution, ubiquitously expressed.

The protein localises to the nucleus. As a likely component of a histone deacetylase complex, together with saeg-1 and hda-2, functions downstream of the cAMP-dependent kinase egl-4 to regulate the expression of genes required for egg-laying and foraging. The polypeptide is Suppressor of activated egl-4 protein 2 (Caenorhabditis elegans).